The sequence spans 343 residues: MEELTYKAAGVDIDAGMDVVRRIKSEVEKTLNPNVLAGIGGFSALYCLDVTGYNEPVLVSSTDGVGTKLKIAQALGKYDTIGIDLVAMVVNDLLTVGAKPLFFLDYVAVGKLNPEQVADLVKGMAEGCLEADCALVGGETAEMPGVYHPGDFDIAGFGVGVVEKSKIIDGSSVKAGDVIIGVASSGIHSNGLSLARKALLEYGNYHLTAYVEEFGKTLGEELLTPTRIYVKPVLDLMQKVEIKGMAHITGGGIVDNLPRILPEKVEARITVNWEIPKIFKLIEKAGNVPRREMWRTFNMGIGFILIVEEAKVQEAIKTLESFNYKAWVIGEITAGERRVIINE.

This sequence belongs to the AIR synthase family.

It is found in the cytoplasm. It catalyses the reaction 2-formamido-N(1)-(5-O-phospho-beta-D-ribosyl)acetamidine + ATP = 5-amino-1-(5-phospho-beta-D-ribosyl)imidazole + ADP + phosphate + H(+). The protein operates within purine metabolism; IMP biosynthesis via de novo pathway; 5-amino-1-(5-phospho-D-ribosyl)imidazole from N(2)-formyl-N(1)-(5-phospho-D-ribosyl)glycinamide: step 2/2. This Carboxydothermus hydrogenoformans (strain ATCC BAA-161 / DSM 6008 / Z-2901) protein is Phosphoribosylformylglycinamidine cyclo-ligase.